A 98-amino-acid polypeptide reads, in one-letter code: Large ribosomal subunit protein uL23 (98 aa).

This sequence belongs to the universal ribosomal protein uL23 family. In terms of assembly, part of the 50S ribosomal subunit. Contacts protein L29, and trigger factor when it is bound to the ribosome.

Functionally, one of the early assembly proteins it binds 23S rRNA. One of the proteins that surrounds the polypeptide exit tunnel on the outside of the ribosome. Forms the main docking site for trigger factor binding to the ribosome. In Koribacter versatilis (strain Ellin345), this protein is Large ribosomal subunit protein uL23.